The following is a 309-amino-acid chain: MTELTIHADRAQLGIPLFPAHPVDGLAGTSFKHQHLPAILADDEWTGGFFEVHAENYMGAGGPPHAALTKIREDYPVSLHGVCMSIGGPQSLDKGHLARFAALVKRYEPALVSEHLAWSTHDTTYYNDLLPLPYTEASLQRVAEHINEVQEVIGRPLLLENPSSYLLFKESTMSETAFIRGLVRRTGCGLLLDINNVFVSATNHGFSALDYLSDFPMAHVGEIHLAGHTEQQDDEGDLLLIDSHDKPVADAVWKLFDVVIALCGPIPTLVEWDSAIPDWPILKREAQAAQMLMDRHAAGLRQETLHVRG.

It belongs to the UPF0276 family.

The sequence is that of UPF0276 protein RB0508 from Rhizobium meliloti (strain 1021) (Ensifer meliloti).